The chain runs to 633 residues: Threonine--tRNA ligase (633 aa).

A TGS domain is found at 1–59 (MIKVTFLAEQKVKEYSGRVTGFDILQPDALREAIAFKVNGELYDLSREIESDTEIEVIQ). The tract at residues 240 to 532 (DHRKIAKDMD…LIENYAGKFP (293 aa)) is catalytic. Cysteine 332, histidine 383, and histidine 509 together coordinate Zn(2+).

The protein belongs to the class-II aminoacyl-tRNA synthetase family. In terms of assembly, homodimer. Zn(2+) is required as a cofactor.

The protein localises to the cytoplasm. The enzyme catalyses tRNA(Thr) + L-threonine + ATP = L-threonyl-tRNA(Thr) + AMP + diphosphate + H(+). Functionally, catalyzes the attachment of threonine to tRNA(Thr) in a two-step reaction: L-threonine is first activated by ATP to form Thr-AMP and then transferred to the acceptor end of tRNA(Thr). Also edits incorrectly charged L-seryl-tRNA(Thr). The polypeptide is Threonine--tRNA ligase (Wolbachia pipientis subsp. Culex pipiens (strain wPip)).